The following is an 853-amino-acid chain: Dynein axonemal assembly factor 5 (853 aa).

N-acetylalanine is present on Ala-2. HEAT repeat units lie at residues 69 to 107, 200 to 238, 240 to 276, 278 to 316, 374 to 412, 597 to 636, 694 to 732, 736 to 774, and 782 to 820; these read GPWA…RAAR, HMQS…FGSG, SVDD…NLRD, YSFL…QWQQ, RVKA…DEEK, GEAL…RPKD, QEAQ…NSGD, PEKF…CIES, and QSSV…LFPD.

It belongs to the DNAAF5 family. Interacts with DNAI2; probably involved in outer arm dynein assembly. Expressed in ciliated cells including ependymal cells lining the lateral ventricles and multiciliated epithelium of oviduct ampulla.

The protein localises to the cytoplasm. The protein resides in the cytoplasmic granule. Cytoplasmic protein involved in the delivery of the dynein machinery to the motile cilium. It is required for the assembly of the axonemal dynein inner and outer arms, two structures attached to the peripheral outer doublet A microtubule of the axoneme, that play a crucial role in cilium motility. This is Dynein axonemal assembly factor 5 from Mus musculus (Mouse).